The following is a 1059-amino-acid chain: IQ motif-containing protein H (1059 aa).

Residues 6-35 adopt a coiled-coil conformation; it reads KNKDEVGNILVKVQDDLRQLKKNIVQFTVQ. A disordered region spans residues 245–267; it reads MESAESRLLRAPPPSAASASSDN. The 30-residue stretch at 401 to 430 folds into the IQ domain; that stretch reads HQAAAVRIQTCWRRYSARTAYLIRLRSKWA.

This is IQ motif-containing protein H (iqch) from Danio rerio (Zebrafish).